A 102-amino-acid polypeptide reads, in one-letter code: PqqA binding protein (102 aa).

The protein belongs to the PqqD family. As to quaternary structure, monomer. Interacts with PqqE.

It functions in the pathway cofactor biosynthesis; pyrroloquinoline quinone biosynthesis. Its function is as follows. Functions as a PqqA binding protein and presents PqqA to PqqE, in the pyrroloquinoline quinone (PQQ) biosynthetic pathway. In Rhodopseudomonas palustris (strain BisB5), this protein is PqqA binding protein.